The following is a 71-amino-acid chain: Putative membrane protein insertion efficiency factor (71 aa).

This sequence belongs to the UPF0161 family.

The protein localises to the cell membrane. Its function is as follows. Could be involved in insertion of integral membrane proteins into the membrane. The chain is Putative membrane protein insertion efficiency factor from Clostridium acetobutylicum (strain ATCC 824 / DSM 792 / JCM 1419 / IAM 19013 / LMG 5710 / NBRC 13948 / NRRL B-527 / VKM B-1787 / 2291 / W).